The sequence spans 258 residues: Cell division protein FtsQ (258 aa).

Topologically, residues 1 to 29 are cytoplasmic; it reads MAKNAPAPRGARRKPVKKVGVPLRERVAT. The helical transmembrane segment at 30 to 50 threads the bilayer; that stretch reads AVPWMLVGSVAMVSLLAVIYL. The Periplasmic segment spans residues 51–258; it reads PAALDGYPIR…MAVTWREQQS (208 aa). A POTRA domain is found at 57-127; that stretch reads YPIRKVGVDG…DTVVLTVEER (71 aa).

This sequence belongs to the FtsQ/DivIB family. FtsQ subfamily. As to quaternary structure, part of a complex composed of FtsB, FtsL and FtsQ.

It is found in the cell inner membrane. Essential cell division protein. May link together the upstream cell division proteins, which are predominantly cytoplasmic, with the downstream cell division proteins, which are predominantly periplasmic. May control correct divisome assembly. The sequence is that of Cell division protein FtsQ from Alcanivorax borkumensis (strain ATCC 700651 / DSM 11573 / NCIMB 13689 / SK2).